The sequence spans 451 residues: Phosphoglucosamine mutase (451 aa).

Catalysis depends on Ser101, which acts as the Phosphoserine intermediate. Residues Ser101, Asp240, Asp242, and Asp244 each contribute to the Mg(2+) site. Ser101 carries the post-translational modification Phosphoserine.

This sequence belongs to the phosphohexose mutase family. Mg(2+) serves as cofactor. Activated by phosphorylation.

It catalyses the reaction alpha-D-glucosamine 1-phosphate = D-glucosamine 6-phosphate. In terms of biological role, catalyzes the conversion of glucosamine-6-phosphate to glucosamine-1-phosphate. The sequence is that of Phosphoglucosamine mutase from Streptococcus pyogenes serotype M1.